We begin with the raw amino-acid sequence, 271 residues long: Probable diacyglycerol O-acyltransferase tgs3 (271 aa).

The protein belongs to the long-chain O-acyltransferase family.

It carries out the reaction an acyl-CoA + a 1,2-diacyl-sn-glycerol = a triacyl-sn-glycerol + CoA. The protein operates within glycerolipid metabolism; triacylglycerol biosynthesis. Functionally, catalyzes the terminal and only committed step in triacylglycerol synthesis by using diacylglycerol and fatty acyl CoA as substrates. Required for storage lipid synthesis. The polypeptide is Probable diacyglycerol O-acyltransferase tgs3 (tgs3) (Mycobacterium tuberculosis (strain CDC 1551 / Oshkosh)).